The following is a 287-amino-acid chain: Outer membrane protein TP0453 (287 aa).

A signal peptide spans 1 to 24 (MIRRRYRGCTQGAWIVSVGMLFAS). Residue Cys25 is the site of N-palmitoyl cysteine attachment. Cys25 carries S-diacylglycerol cysteine lipidation. Amphipathic helix regions lie at residues 36–40 (PLGVV), 56–63 (ENLISRII), 69–77 (KADIKKIVD), 103–112 (YAFTNLIFSR), 155–162 (MSKMLSRL), 172–179 (PRFEKECT), 194–202 (GGHFITKLL), 240–250 (FPIQFLISRVL), and 270–279 (AERLASVISS).

As to quaternary structure, a mix of monomer and dimers; may integrate into the membrane as a dimer. In terms of processing, palmitoylated upon expression of a fusion protein with first 46 residues fused to PhoA in E.coli.

Its subcellular location is the cell outer membrane. Functionally, might be involved in ligand transport, alters membrane permeability at acidic pH (4.0 to 5.5). Incubation of the non-lipidated form with lipid vesicles increases their permeability. This is Outer membrane protein TP0453 from Treponema pallidum (strain Nichols).